The chain runs to 427 residues: Histidine--tRNA ligase (427 aa).

This sequence belongs to the class-II aminoacyl-tRNA synthetase family. In terms of assembly, homodimer.

The protein resides in the cytoplasm. It carries out the reaction tRNA(His) + L-histidine + ATP = L-histidyl-tRNA(His) + AMP + diphosphate + H(+). In Streptococcus suis (strain 98HAH33), this protein is Histidine--tRNA ligase.